A 122-amino-acid chain; its full sequence is Large ribosomal subunit protein uL14 (122 aa).

The protein belongs to the universal ribosomal protein uL14 family. As to quaternary structure, part of the 50S ribosomal subunit. Forms a cluster with proteins L3 and L19. In the 70S ribosome, L14 and L19 interact and together make contacts with the 16S rRNA in bridges B5 and B8.

Functionally, binds to 23S rRNA. Forms part of two intersubunit bridges in the 70S ribosome. In Idiomarina loihiensis (strain ATCC BAA-735 / DSM 15497 / L2-TR), this protein is Large ribosomal subunit protein uL14.